A 648-amino-acid polypeptide reads, in one-letter code: MVGFIGSVLIKLIEFEVPFIDCLYIGYSALTTTGLVTVDISGWSSGTLFLLVILVQLGSTVLLTLPIVLLRRFFIRSVYSNSSIISAANASPDLISTIIHSHLPHHDFKDDDDENDNNNNEENDDNDDESYQHNNNNNEEHDDNDIEIGGILKLDSPIDHNLPNGFQDDNAPHHYNIPIVGKIDKKSRKFSLDSPSSPIIQQQQQQQQQQQQQQQQQQQQQQQQQQQPSTTTTTTTTTNSTLNKSTNNSTNNNNNTNDSQSIQKEVNIDINRIDSLQELQEQQEHQQQQRQLSKPLNLNSYEDNMEYRSLGKLLVIIPCYIITIYILGFISIGAYIAGSESARSIMKANGVNGWWWSLFHTFSAFNNAGLALFSDSLIQINEKYFLLITLSILIFLGNTLFPVFLRIILLVVSKFTKDPEPYRNLLENPRSIFTHLFPYKETVQLFVIWCIFNVSQIALMALLDVNDKAFTNMNYGTILLNYYFSSISTRTCGFNSVDLNLLSESVLLLFVGLMFVSSYPFIISLRRSAVNNKYSNQSREVMKEVLIRDIFVPYICILFIAIFESQLLESGVITVFQILFEAISAFGNVGLSISITLSTYSKLVFIALMLAGKHRQLPESVDESVNPALLKKNAVISKIITRYKRRKL.

Residues 48-68 (LFLLVILVQLGSTVLLTLPIV) form a helical membrane-spanning segment. Asparagine 81 is a glycosylation site (N-linked (GlcNAc...) asparagine). Disordered stretches follow at residues 106–145 (HDFK…DDND) and 223–261 (QQQQ…DSQS). Positions 110-129 (DDDDENDNNNNEENDDNDDE) are enriched in acidic residues. Residues 199–227 (IIQQQQQQQQQQQQQQQQQQQQQQQQQQQ) are a coiled coil. N-linked (GlcNAc...) asparagine glycans are attached at residues asparagine 239, asparagine 243, asparagine 247, asparagine 248, asparagine 254, and asparagine 257. A run of 6 helical transmembrane segments spans residues 313–333 (LLVI…ISIG), 353–373 (GWWW…LALF), 385–405 (FLLI…PVFL), 443–463 (VQLF…MALL), 472–491 (NMNY…STRT), and 505–525 (SVLL…IISL). Asparagine 536 carries an N-linked (GlcNAc...) asparagine glycan. The next 3 membrane-spanning stretches (helical) occupy residues 550–570 (IFVP…LLES), 571–591 (GVIT…NVGL), and 592–612 (SISI…MLAG).

This sequence belongs to the TrkH potassium transport family.

It is found in the membrane. May function as a potassium transporter. The polypeptide is Putative potassium transport protein DDB_G0292412 (Dictyostelium discoideum (Social amoeba)).